A 251-amino-acid chain; its full sequence is tRNA-cytidine(32) 2-sulfurtransferase 1 (251 aa).

The PP-loop motif motif lies at 33 to 38; the sequence is SGGKDS. 3 residues coordinate [4Fe-4S] cluster: C108, C111, and C199.

This sequence belongs to the TtcA family. As to quaternary structure, homodimer. Mg(2+) is required as a cofactor. The cofactor is [4Fe-4S] cluster.

The protein localises to the cytoplasm. It carries out the reaction cytidine(32) in tRNA + S-sulfanyl-L-cysteinyl-[cysteine desulfurase] + AH2 + ATP = 2-thiocytidine(32) in tRNA + L-cysteinyl-[cysteine desulfurase] + A + AMP + diphosphate + H(+). It functions in the pathway tRNA modification. Catalyzes the ATP-dependent 2-thiolation of cytidine in position 32 of tRNA, to form 2-thiocytidine (s(2)C32). The sulfur atoms are provided by the cysteine/cysteine desulfurase (IscS) system. The protein is tRNA-cytidine(32) 2-sulfurtransferase 1 of Francisella tularensis subsp. holarctica (strain FTNF002-00 / FTA).